Here is a 734-residue protein sequence, read N- to C-terminus: MALRFPRFSQGLAQDPTTRRIWFGIATAHDFESHDDITEERLYQNIFASHFGQLAIIFLWTSGNLFHVAWQGNFETWVQDPLHVRPIAHAIWDPHFGQPAVEAFTRGGALGPVNIAYSGVYQWWYTIGLRTNEDLYIGALFLLFLSAVSLLGGWLHLQPKWKPSVSWFKNAESRLNHHLSGLFGVSSLAWTGHLVHVAIPGSRGESVRWNNFLDVLPHPQGLGPLFTGQWNLYAQNPDSSSHLFGTSQGAGTAILTLLGGFHPQTQSLWLTDMAHHHLAIAFLFLIAGHMYRTNFGIGHSIKDLLEAHIPPGGRLGRGHKGLYDTINNSLHFQLGLALASLGVITSLVAQHMYSLPAYAFIAQDFTTQAALYTHHQYIAGFIMTGAFAHGAIFFIRDYNPEQNEDNVLARMLDHKEAIISHLSWASLFLGFHTLGLYVHNDVMLAFGTPEKQILIEPIFAQWIQSAHGKTSYGFDVLLSSTNSPAFNAGRSIWLPGWLNAINENSNSLFLTIGPGDFLVHHAIALGLHTTTLILVKGALDARGSKLMPDKKDFGYSFPCDGPGRGGTCDISAWDAFYLAVFWMLNTIGWVTFYWHWKHITLWQGNVSQFNESSTYLMGWLRDYLWLNSSQLINGYNPFGMNSLSVWAWMFLFGHLVWATGFMFLISWRGYWQELIETLAWAHERTPLANLIRWRDKPVALSIVQARLVGLAHFSVGYIFTYAAFLIASTSGKFG.

The next 8 helical transmembrane spans lie at 46-69, 135-158, 175-199, 273-291, 330-353, 369-395, 417-439, and 517-535; these read IFASHFGQLAIIFLWTSGNLFHVA, LYIGALFLLFLSAVSLLGGWLHLQ, LNHHLSGLFGVSSLAWTGHLVHVAI, MAHHHLAIAFLFLIAGHMY, LHFQLGLALASLGVITSLVAQHMY, AALYTHHQYIAGFIMTGAFAHGAIFFI, AIISHLSWASLFLGFHTLGLYVH, and FLVHHAIALGLHTTTLILV. [4Fe-4S] cluster-binding residues include Cys559 and Cys568. The next 2 membrane-spanning stretches (helical) occupy residues 575–596 and 643–665; these read AFYLAVFWMLNTIGWVTFYWHW and LSVWAWMFLFGHLVWATGFMFLI. 3 residues coordinate chlorophyll a: His654, Met662, and Tyr670. A phylloquinone-binding site is contributed by Trp671. Residues 707–727 form a helical membrane-spanning segment; the sequence is LVGLAHFSVGYIFTYAAFLIA.

The protein belongs to the PsaA/PsaB family. As to quaternary structure, the PsaA/B heterodimer binds the P700 chlorophyll special pair and subsequent electron acceptors. PSI consists of a core antenna complex that captures photons, and an electron transfer chain that converts photonic excitation into a charge separation. The eukaryotic PSI reaction center is composed of at least 11 subunits. It depends on P700 is a chlorophyll a/chlorophyll a' dimer, A0 is one or more chlorophyll a, A1 is one or both phylloquinones and FX is a shared 4Fe-4S iron-sulfur center. as a cofactor.

It is found in the plastid. It localises to the chloroplast thylakoid membrane. It catalyses the reaction reduced [plastocyanin] + hnu + oxidized [2Fe-2S]-[ferredoxin] = oxidized [plastocyanin] + reduced [2Fe-2S]-[ferredoxin]. Functionally, psaA and PsaB bind P700, the primary electron donor of photosystem I (PSI), as well as the electron acceptors A0, A1 and FX. PSI is a plastocyanin-ferredoxin oxidoreductase, converting photonic excitation into a charge separation, which transfers an electron from the donor P700 chlorophyll pair to the spectroscopically characterized acceptors A0, A1, FX, FA and FB in turn. Oxidized P700 is reduced on the lumenal side of the thylakoid membrane by plastocyanin. This Populus alba (White poplar) protein is Photosystem I P700 chlorophyll a apoprotein A2.